We begin with the raw amino-acid sequence, 343 residues long: Heat-inducible transcription repressor HrcA (343 aa).

The protein belongs to the HrcA family.

Functionally, negative regulator of class I heat shock genes (grpE-dnaK-dnaJ and groELS operons). Prevents heat-shock induction of these operons. This is Heat-inducible transcription repressor HrcA from Mycolicibacterium vanbaalenii (strain DSM 7251 / JCM 13017 / BCRC 16820 / KCTC 9966 / NRRL B-24157 / PYR-1) (Mycobacterium vanbaalenii).